A 139-amino-acid polypeptide reads, in one-letter code: Large ribosomal subunit protein uL16 (139 aa).

It belongs to the universal ribosomal protein uL16 family. In terms of assembly, part of the 50S ribosomal subunit.

Functionally, binds 23S rRNA and is also seen to make contacts with the A and possibly P site tRNAs. This chain is Large ribosomal subunit protein uL16, found in Koribacter versatilis (strain Ellin345).